Consider the following 396-residue polypeptide: S-adenosylmethionine synthase (396 aa).

H14 lines the ATP pocket. D16 contributes to the Mg(2+) binding site. E42 lines the K(+) pocket. Residues E55 and Q98 each coordinate L-methionine. The flexible loop stretch occupies residues 98–108 (QSPDIAMGVDK). Residues 174–176 (DGK), 240–241 (RF), D249, 255–256 (RK), A272, and K276 each bind ATP. D249 is an L-methionine binding site. L-methionine is bound at residue K280.

Belongs to the AdoMet synthase family. In terms of assembly, homotetramer; dimer of dimers. It depends on Mg(2+) as a cofactor. The cofactor is K(+).

The protein resides in the cytoplasm. The enzyme catalyses L-methionine + ATP + H2O = S-adenosyl-L-methionine + phosphate + diphosphate. The protein operates within amino-acid biosynthesis; S-adenosyl-L-methionine biosynthesis; S-adenosyl-L-methionine from L-methionine: step 1/1. Its function is as follows. Catalyzes the formation of S-adenosylmethionine (AdoMet) from methionine and ATP. The overall synthetic reaction is composed of two sequential steps, AdoMet formation and the subsequent tripolyphosphate hydrolysis which occurs prior to release of AdoMet from the enzyme. This chain is S-adenosylmethionine synthase, found in Caldicellulosiruptor saccharolyticus (strain ATCC 43494 / DSM 8903 / Tp8T 6331).